The primary structure comprises 76 residues: Translation initiation factor IF-1 (76 aa).

An S1-like domain is found at M1–K76.

Belongs to the IF-1 family. Component of the 30S ribosomal translation pre-initiation complex which assembles on the 30S ribosome in the order IF-2 and IF-3, IF-1 and N-formylmethionyl-tRNA(fMet); mRNA recruitment can occur at any time during PIC assembly.

It localises to the cytoplasm. In terms of biological role, one of the essential components for the initiation of protein synthesis. Stabilizes the binding of IF-2 and IF-3 on the 30S subunit to which N-formylmethionyl-tRNA(fMet) subsequently binds. Helps modulate mRNA selection, yielding the 30S pre-initiation complex (PIC). Upon addition of the 50S ribosomal subunit IF-1, IF-2 and IF-3 are released leaving the mature 70S translation initiation complex. The protein is Translation initiation factor IF-1 of Renibacterium salmoninarum (strain ATCC 33209 / DSM 20767 / JCM 11484 / NBRC 15589 / NCIMB 2235).